Reading from the N-terminus, the 220-residue chain is MHSRLATARLYLCTDARRERGDLADFADAALAGGVDIIQLRDKGSAGEQRFGPLEARDELAACEILADAAARHAAMFAVNDRADIARAARADVLHLGQRDLPVDVARAITGPATLIGQSTHDRDQVSAAAIGAVDYFCVGPCWPTPTKPGRTAPGLDLVRFAADVAGAKPWFAIGGIDGVRLPEVLAAGARRIVVVRAITAADDPREAAAKLKSELLAAI.

Residues 39–43 (QLRDK) and N80 each bind 4-amino-2-methyl-5-(diphosphooxymethyl)pyrimidine. Mg(2+) is bound by residues D81 and D100. S119 contacts 4-amino-2-methyl-5-(diphosphooxymethyl)pyrimidine. 145 to 147 (TPT) provides a ligand contact to 2-[(2R,5Z)-2-carboxy-4-methylthiazol-5(2H)-ylidene]ethyl phosphate. K148 is a 4-amino-2-methyl-5-(diphosphooxymethyl)pyrimidine binding site. Residue G176 participates in 2-[(2R,5Z)-2-carboxy-4-methylthiazol-5(2H)-ylidene]ethyl phosphate binding.

Belongs to the thiamine-phosphate synthase family. Mg(2+) is required as a cofactor.

The catalysed reaction is 2-[(2R,5Z)-2-carboxy-4-methylthiazol-5(2H)-ylidene]ethyl phosphate + 4-amino-2-methyl-5-(diphosphooxymethyl)pyrimidine + 2 H(+) = thiamine phosphate + CO2 + diphosphate. It catalyses the reaction 2-(2-carboxy-4-methylthiazol-5-yl)ethyl phosphate + 4-amino-2-methyl-5-(diphosphooxymethyl)pyrimidine + 2 H(+) = thiamine phosphate + CO2 + diphosphate. The enzyme catalyses 4-methyl-5-(2-phosphooxyethyl)-thiazole + 4-amino-2-methyl-5-(diphosphooxymethyl)pyrimidine + H(+) = thiamine phosphate + diphosphate. The protein operates within cofactor biosynthesis; thiamine diphosphate biosynthesis; thiamine phosphate from 4-amino-2-methyl-5-diphosphomethylpyrimidine and 4-methyl-5-(2-phosphoethyl)-thiazole: step 1/1. Its function is as follows. Condenses 4-methyl-5-(beta-hydroxyethyl)thiazole monophosphate (THZ-P) and 2-methyl-4-amino-5-hydroxymethyl pyrimidine pyrophosphate (HMP-PP) to form thiamine monophosphate (TMP). In Mycobacterium marinum (strain ATCC BAA-535 / M), this protein is Thiamine-phosphate synthase.